The sequence spans 630 residues: Low affinity heme transporter str3 (630 aa).

Residues 1–26 (MEAKETHSISDHEVELQDAKPEEKSE) are compositionally biased toward basic and acidic residues. Positions 1-51 (MEAKETHSISDHEVELQDAKPEEKSENGNFVFEKAFSSDEEKGSGYNTNET) are disordered. Over 1 to 79 (MEAKETHSIS…VRDSIYQNKR (79 aa)) the chain is Cytoplasmic. A phosphoserine mark is found at Ser10 and Ser38. Residues 80 to 100 (GMYLAYAFGIAILACSWASAI) form a helical membrane-spanning segment. The Extracellular portion of the chain corresponds to 101-120 (QSSTTYSYQVYATASFNRTS). A helical membrane pass occupies residues 121-141 (MISTLEIATAIISSVCKPILG). Residues 142–154 (KFSDITSRPMTYT) lie on the Cytoplasmic side of the membrane. Residues 155-175 (LVLLFYVIGFIVVASSSTISA) traverse the membrane as a helical segment. Position 176 (Tyr176) is a topological domain, extracellular. Residues 177 to 197 (VIGSVFISIGSSGLDYLNTLV) form a helical membrane-spanning segment. Residues 198–208 (VGDLTSLKWRG) are Cytoplasmic-facing. The helical transmembrane segment at 209 to 229 (FMTALLSTPYIATVWFTGFIV) threads the bilayer. Over 230–241 (QGIIDSNWRWGY) the chain is Extracellular. Residues 242–262 (GMFAIIMPAVMTPAVIILMYL) traverse the membrane as a helical segment. The Cytoplasmic segment spans residues 263–302 (ERQANKDENIKKIINYQTEEKNKNKQSKWQKLWKAVLEVD). A helical transmembrane segment spans residues 303–323 (LFGLILLGVGWSILLLPFSLT). Residues 324 to 335 (SYAKNGWKNPSM) are Extracellular-facing. The helical transmembrane segment at 336–356 (IAMMVVGGVILIAYSGYEMFI) threads the bilayer. Residues 357-370 (APYPSCPRRVMNRT) lie on the Cytoplasmic side of the membrane. Residues 371–391 (FITAVIIDFFYYLAGYLQSMY) form a helical membrane-spanning segment. Residues 392-406 (FTTYTWILYDWSYRD) are Extracellular-facing. The helical transmembrane segment at 407–427 (WTYFNNTMTIALCVFGVFAGA) threads the bilayer. The Cytoplasmic portion of the chain corresponds to 428–439 (MHRVFHRYKYLQ). The helical transmembrane segment at 440-460 (IIGLVIKIVGYGILIRPNFAA) threads the bilayer. Residues 461–465 (TGKVD) lie on the Extracellular side of the membrane. A helical transmembrane segment spans residues 466–486 (LAWSLILIGMGGSFSVVGSQV). Topologically, residues 487-502 (SCQASVPHQDLAIASS) are cytoplasmic. The chain crosses the membrane as a helical span at residues 503 to 523 (LLPLYTNIGGAIGAAIASPIF). Residues 522–576 (IFSNKVPKYLREYLPSSINDTQVYNFYSDSSLIREYPVGTEIRDGAIKAYSRSMF) form a heme binding region. At 524–574 (SNKVPKYLREYLPSSINDTQVYNFYSDSSLIREYPVGTEIRDGAIKAYSRS) the chain is on the extracellular side. Residues 575-595 (MFFLLVPAVSLSFIPLAAAFW) form a helical membrane-spanning segment. Topologically, residues 596 to 630 (QSNFYLGNQQNAVEGDQDHKKKGDKETTQEEKIII) are cytoplasmic. Residues 610–630 (GDQDHKKKGDKETTQEEKIII) are disordered. Over residues 611–630 (DQDHKKKGDKETTQEEKIII) the composition is skewed to basic and acidic residues.

The protein belongs to the major facilitator superfamily.

It localises to the cell membrane. Functionally, low affinity heme transporter involved in the assimilation of exogenous heme during conditions of low cellular iron. The polypeptide is Low affinity heme transporter str3 (Schizosaccharomyces pombe (strain 972 / ATCC 24843) (Fission yeast)).